The following is an 855-amino-acid chain: Beclin-1-like protein B (855 aa).

Disordered stretches follow at residues 92-212 (FGKR…GSLS), 236-271 (LVAD…ESNN), 294-380 (ATIP…QKPR), and 407-475 (VDGG…QQQP). Composition is skewed to low complexity over residues 99–123 (TQSN…SLSL) and 131–143 (QQQQ…QQQT). Residues 144-156 (FNDQSKLTATTPT) are compositionally biased toward polar residues. Low complexity predominate over residues 177–200 (HSNNSSNGSDHGGNVNTTGVSPSS). Residues 294 to 348 (ATIPTTTTTSTPTTPSTVGGTTPSPPSSSSSSSSSSSVITSPISRISPSNITSPS) are compositionally biased toward low complexity. 2 stretches are compositionally biased toward polar residues: residues 368 to 377 (LNISQVSSPQ) and 413 to 445 (SGTE…TTPP). Positions 446–474 (LLSNSMNNSTNNLQSLQQQQQQQQQQQQQ) are enriched in low complexity. Residues 538 to 595 (EKGKTEEDLEELGKEMTLLCEEEEQLRLMIENTHQERKEVEQLTLQLQDRIATLKSLE) adopt a coiled-coil conformation. The disordered stretch occupies residues 826 to 855 (LNNNQNNNNINNNNNNNINNNNNNNVNKRN).

This sequence belongs to the beclin family.

It localises to the endosome membrane. Involved in autophagy. May be required to recruit the atg8-phosphatidylinositol conjugate and the atg12-atg5 conjugate to the pre-autophagosomal structure. This is Beclin-1-like protein B (atg6B) from Dictyostelium discoideum (Social amoeba).